Consider the following 104-residue polypeptide: Ribonuclease P protein component 4 (104 aa).

Residues C57, C60, C83, and C86 each contribute to the Zn(2+) site.

The protein belongs to the eukaryotic/archaeal RNase P protein component 4 family. Consists of a catalytic RNA component and at least 4-5 protein subunits. It depends on Zn(2+) as a cofactor.

The protein resides in the cytoplasm. The catalysed reaction is Endonucleolytic cleavage of RNA, removing 5'-extranucleotides from tRNA precursor.. Part of ribonuclease P, a protein complex that generates mature tRNA molecules by cleaving their 5'-ends. The sequence is that of Ribonuclease P protein component 4 from Saccharolobus islandicus (strain M.14.25 / Kamchatka #1) (Sulfolobus islandicus).